Consider the following 189-residue polypeptide: Small ribosomal subunit protein uS5 (189 aa).

The S5 DRBM domain maps to 22–85 (LIDKLVTINR…ERAKRGMIRV (64 aa)). A disordered region spans residues 164 to 189 (SVASRRGKKVADLFGPKREKEAPADV). Residues 172-189 (KVADLFGPKREKEAPADV) are compositionally biased toward basic and acidic residues.

This sequence belongs to the universal ribosomal protein uS5 family. Part of the 30S ribosomal subunit. Contacts proteins S4 and S8.

Functionally, with S4 and S12 plays an important role in translational accuracy. In terms of biological role, located at the back of the 30S subunit body where it stabilizes the conformation of the head with respect to the body. The sequence is that of Small ribosomal subunit protein uS5 from Acidiphilium cryptum (strain JF-5).